The sequence spans 118 residues: Small ribosomal subunit protein uS13 (118 aa).

A disordered region spans residues 94-118 (SLPLRGQRTKTNARTRKGPRKPIKR).

This sequence belongs to the universal ribosomal protein uS13 family. Part of the 30S ribosomal subunit. Forms a loose heterodimer with protein S19. Forms two bridges to the 50S subunit in the 70S ribosome.

Functionally, located at the top of the head of the 30S subunit, it contacts several helices of the 16S rRNA. In the 70S ribosome it contacts the 23S rRNA (bridge B1a) and protein L5 of the 50S subunit (bridge B1b), connecting the 2 subunits; these bridges are implicated in subunit movement. Contacts the tRNAs in the A and P-sites. The protein is Small ribosomal subunit protein uS13 of Pseudoalteromonas translucida (strain TAC 125).